The following is a 264-amino-acid chain: S-adenosylmethionine decarboxylase proenzyme (264 aa).

Serine 112 (schiff-base intermediate with substrate; via pyruvic acid) is an active-site residue. Position 112 is a pyruvic acid (Ser); by autocatalysis (serine 112). The active-site Proton acceptor; for processing activity is histidine 117. Cysteine 140 (proton donor; for catalytic activity) is an active-site residue.

The protein belongs to the prokaryotic AdoMetDC family. Type 2 subfamily. In terms of assembly, heterooctamer of four alpha and four beta chains arranged as a tetramer of alpha/beta heterodimers. Pyruvate serves as cofactor. Post-translationally, is synthesized initially as an inactive proenzyme. Formation of the active enzyme involves a self-maturation process in which the active site pyruvoyl group is generated from an internal serine residue via an autocatalytic post-translational modification. Two non-identical subunits are generated from the proenzyme in this reaction, and the pyruvate is formed at the N-terminus of the alpha chain, which is derived from the carboxyl end of the proenzyme. The post-translation cleavage follows an unusual pathway, termed non-hydrolytic serinolysis, in which the side chain hydroxyl group of the serine supplies its oxygen atom to form the C-terminus of the beta chain, while the remainder of the serine residue undergoes an oxidative deamination to produce ammonia and the pyruvoyl group blocking the N-terminus of the alpha chain.

It catalyses the reaction S-adenosyl-L-methionine + H(+) = S-adenosyl 3-(methylsulfanyl)propylamine + CO2. Its pathway is amine and polyamine biosynthesis; S-adenosylmethioninamine biosynthesis; S-adenosylmethioninamine from S-adenosyl-L-methionine: step 1/1. In terms of biological role, catalyzes the decarboxylation of S-adenosylmethionine to S-adenosylmethioninamine (dcAdoMet), the propylamine donor required for the synthesis of the polyamines spermine and spermidine from the diamine putrescine. The sequence is that of S-adenosylmethionine decarboxylase proenzyme from Salmonella gallinarum (strain 287/91 / NCTC 13346).